The chain runs to 1738 residues: Interaptin (1738 aa).

An actin-binding region spans residues 1–248 (MEHSTPLNEE…TYISLFPKVY (248 aa)). The Cytoplasmic segment spans residues 1–1705 (MEHSTPLNEE…RIFPSKNTRP (1705 aa)). Calponin-homology (CH) domains lie at 22-128 (IAQK…LRYQ) and 146-249 (TKPS…KVYQ). Disordered stretches follow at residues 285 to 350 (SKST…SNLS), 1068 to 1090 (IQQLQSQLNEQRQQQSNQLSEKD), and 1589 to 1627 (LQQQKQQQQQPPTASSSPSSSPSLLSSTPTPKPQRPNQI). Positions 292-301 (QQNQQQQQQN) are enriched in low complexity. Positions 302–316 (LLSPNSYRNSISFSK) are enriched in polar residues. 3 stretches are compositionally biased toward low complexity: residues 317–344 (SPSFEGSQSTGSSRSISPISSPIKNSTT), 1068–1086 (IQQLQSQLNEQRQQQSNQL), and 1589–1617 (LQQQKQQQQQPPTASSSPSSSPSLLSSTP). Positions 373-1598 (EESRVIEKIV…LQQQKQQQQQ (1226 aa)) form a coiled coil. A helical; Anchor for type IV membrane protein transmembrane segment spans residues 1706 to 1726 (IFDWRALFFIGAAVLAISTLF).

The protein belongs to the alpha-actinin family.

It is found in the nucleus membrane. The protein localises to the endoplasmic reticulum membrane. The protein resides in the golgi apparatus. It localises to the golgi stack membrane. Its subcellular location is the cytoplasm. It is found in the cytoskeleton. The protein localises to the microtubule organizing center. The protein resides in the centrosome. In terms of biological role, may function as linker between cellular membranes and the actin cytoskeleton. Required for normal development of fruiting bodies. The chain is Interaptin (abpD) from Dictyostelium discoideum (Social amoeba).